We begin with the raw amino-acid sequence, 60 residues long: Large ribosomal subunit protein uL30 (60 aa).

This sequence belongs to the universal ribosomal protein uL30 family. Part of the 50S ribosomal subunit.

This is Large ribosomal subunit protein uL30 from Leuconostoc citreum (strain KM20).